The sequence spans 638 residues: 1-deoxy-D-xylulose-5-phosphate synthase (638 aa).

Thiamine diphosphate is bound by residues His-72 and 113–115; that span reads GHA. Asp-144 contributes to the Mg(2+) binding site. Thiamine diphosphate is bound by residues 145-146, Asn-174, Tyr-289, and Glu-372; that span reads GA. Residue Asn-174 participates in Mg(2+) binding.

The protein belongs to the transketolase family. DXPS subfamily. In terms of assembly, homodimer. Mg(2+) is required as a cofactor. The cofactor is thiamine diphosphate.

It catalyses the reaction D-glyceraldehyde 3-phosphate + pyruvate + H(+) = 1-deoxy-D-xylulose 5-phosphate + CO2. It participates in metabolic intermediate biosynthesis; 1-deoxy-D-xylulose 5-phosphate biosynthesis; 1-deoxy-D-xylulose 5-phosphate from D-glyceraldehyde 3-phosphate and pyruvate: step 1/1. Functionally, catalyzes the acyloin condensation reaction between C atoms 2 and 3 of pyruvate and glyceraldehyde 3-phosphate to yield 1-deoxy-D-xylulose-5-phosphate (DXP). The chain is 1-deoxy-D-xylulose-5-phosphate synthase from Gloeobacter violaceus (strain ATCC 29082 / PCC 7421).